Reading from the N-terminus, the 264-residue chain is Protein DSE2 (264 aa).

The N-terminal stretch at 1–23 is a signal peptide; it reads MQFKKSSIVSFLSLLGSLTKAAA. Residues 75–92 show a composition bias toward low complexity; sequence TRESVVTSTLSSTSLLPE. Residues 75–213 form a disordered region; sequence TRESVVTSTL…STSTSSSSVL (139 aa). Acidic residues predominate over residues 93 to 104; the sequence is TTEESTQEDEQT. Composition is skewed to low complexity over residues 105-147, 157-168, and 178-211; these read TDFT…PTTS, STSVITTKSTSK, and TSTL…SSSS. The GPI-anchor amidated aspartate moiety is linked to residue aspartate 247. Residues 248-264 constitute a propeptide, removed in mature form; it reads AATTYTKTRTVYATISS.

The protein resides in the secreted. It localises to the cell wall. It is found in the membrane. In terms of biological role, involved in pseudohyphal growth, cell wall metabolism and required for the separation of the mother and daughter cells. This chain is Protein DSE2 (DSE2), found in Kluyveromyces lactis (strain ATCC 8585 / CBS 2359 / DSM 70799 / NBRC 1267 / NRRL Y-1140 / WM37) (Yeast).